An 854-amino-acid polypeptide reads, in one-letter code: Zinc finger protein 341 (854 aa).

The segment at 53-76 (FLCGKCKKQFNSLPAFMTHKREQC) adopts a C2H2-type 1; atypical zinc-finger fold. The tract at residues 152-217 (DQPMPQGPPP…GRPNPGGNGV (66 aa)) is disordered. A compositionally biased stretch (polar residues) spans 163 to 176 (QSSLNMHSVPSYLT). Residues 177 to 210 (QPPPPPPPPPPLPPPPPPQPPPPPPQSLGPPGRP) are compositionally biased toward pro residues. 2 C2H2-type zinc fingers span residues 322 to 344 (LKCSYCDKSFTKNFDLQQHIRSH) and 350 to 372 (FQCIACGRAFAQKSNVKKHMQTH). The disordered stretch occupies residues 399-434 (SRQEDEESTGLGQPLPGAPQPQALSTAGEEEGDKPE). Over residues 408 to 422 (GLGQPLPGAPQPQAL) the composition is skewed to low complexity. C2H2-type zinc fingers lie at residues 445–467 (YLCQFCPSKFSTYFQLKSHMTQH), 473–497 (YKCVVKSCAQTFPKLDTFLEHIKSH), 503–525 (YRCHLCGKDFPSLYDLGVHQYSH), 540–564 (YKCVKCVNKYSTPEALEHHLQTATH), 566–588 (FPCPHCQKVFPCERYLRRHLPTH), 594–616 (FKCQVCKKFFRREHYLKLHAHIH), 622–644 (YKCSVCESAFNRKDKLKRHMLIH), 650–677 (YKCPFSTHTGCSKEFNRPDKLKAHILSH), and 683–705 (HKCALCSKSFSRRAHLAEHQRAH). The tract at residues 731 to 763 (CRLGPQKDKDLQTRRPPQRRAAPRSCGSGGRKV) is disordered.

This sequence belongs to the krueppel C2H2-type zinc-finger protein family. Binds DNA and to the STAT3 promoter.

It localises to the nucleus. Transcriptional activator of STAT3 involved in the regulation of immune homeostasis. Also able to activate STAT1 transcription. The protein is Zinc finger protein 341 (ZNF341) of Homo sapiens (Human).